The primary structure comprises 444 residues: Maintenance of mitochondrial morphology protein 1 (444 aa).

The Lumenal segment spans residues 1–110 (MNNLDNLAGN…SFSGWSFIEG (110 aa)). Residues 111 to 131 (FIIGQFSVIIVLIFFIKFFVF) form a helical membrane-spanning segment. The Cytoplasmic segment spans residues 132-444 (SDGSSSNSSN…TDDVPLSKAE (313 aa)). Positions 207 to 419 (PSESLDWFNV…EPRFQCIRLP (213 aa)) constitute an SMP-LTD domain.

The protein belongs to the MMM1 family. In terms of assembly, homodimer. Component of the ER-mitochondria encounter structure (ERMES) or MDM complex, composed of MMM1, MDM10, MDM12 and MDM34. An MMM1 homodimer associates with one molecule of MDM12 on each side in a pairwise head-to-tail manner, and the SMP-LTD domains of MMM1 and MDM12 generate a continuous hydrophobic tunnel for phospholipid trafficking.

The protein resides in the endoplasmic reticulum membrane. In terms of biological role, component of the ERMES/MDM complex, which serves as a molecular tether to connect the endoplasmic reticulum (ER) and mitochondria. Components of this complex are involved in the control of mitochondrial shape and protein biogenesis, and function in nonvesicular lipid trafficking between the ER and mitochondria. The MDM12-MMM1 subcomplex functions in the major beta-barrel assembly pathway that is responsible for biogenesis of all outer membrane beta-barrel proteins, and acts in a late step after the SAM complex. The MDM10-MDM12-MMM1 subcomplex further acts in the TOM40-specific pathway after the action of the MDM12-MMM1 complex. Essential for establishing and maintaining the structure of mitochondria and maintenance of mtDNA nucleoids. The polypeptide is Maintenance of mitochondrial morphology protein 1 (Vanderwaltozyma polyspora (strain ATCC 22028 / DSM 70294 / BCRC 21397 / CBS 2163 / NBRC 10782 / NRRL Y-8283 / UCD 57-17) (Kluyveromyces polysporus)).